The chain runs to 171 residues: Neuronal vesicle trafficking-associated protein 2 (171 aa).

A compositionally biased stretch (polar residues) spans 1-10; the sequence is MVKLNSNPSE. Positions 1–21 are disordered; sequence MVKLNSNPSEKGTKPPSVEDG. At 1-71 the chain is on the cytoplasmic side; that stretch reads MVKLNSNPSE…FRVPKIAEFT (71 aa). Residues 72–92 form a helical; Signal-anchor for type II membrane protein membrane-spanning segment; the sequence is VTILVSLALAFLACIVFLVVY. Residues 93–171 lie on the Lumenal side of the membrane; sequence KAFTYDHSCP…EPKPPKTQGH (79 aa).

This sequence belongs to the NSG family.

It localises to the membrane. The protein resides in the golgi apparatus. It is found in the trans-Golgi network membrane. The protein localises to the cell projection. Its subcellular location is the dendrite. It localises to the endosome membrane. The protein resides in the early endosome membrane. It is found in the late endosome membrane. The protein localises to the lysosome lumen. Its subcellular location is the cytoplasmic vesicle membrane. It localises to the golgi stack membrane. The protein resides in the endosome. It is found in the multivesicular body membrane. This chain is Neuronal vesicle trafficking-associated protein 2, found in Homo sapiens (Human).